The chain runs to 340 residues: MIFIDACFKKPTPYTPIWMMRQAGRYLPEYMEVRKQAGDFLSLCKDYKKASEVSLQPIDILDVDAAIIFSDILVVPLEMGMNLRFEKGEGPVFDNPISTLEDLEKLDDQNAHKKLNYVYDALKLTREKLSQNKALIGFCGSPWTIATYMIEGSGSKNYAKCKKMLYQNPELLHKILNKLTQVLKLYLEEQIKAGANAIQIFDSWASALEYDKFFEFSFNYMLEISNFIKSKYPNIPVILFPKGISGYLDRIDGNFDVFGVDWSTPLDLARDKLSHKYTLQGNMEPCRLYDKNAIKEGVGKILKTMQNKAHIFNLGHGILPDIPVENAKYFIKLVQESSAK.

Substrate contacts are provided by residues 21–25, aspartate 71, tyrosine 148, serine 203, and histidine 316; that span reads RQAGR.

Belongs to the uroporphyrinogen decarboxylase family. In terms of assembly, homodimer.

It is found in the cytoplasm. It catalyses the reaction uroporphyrinogen III + 4 H(+) = coproporphyrinogen III + 4 CO2. It functions in the pathway porphyrin-containing compound metabolism; protoporphyrin-IX biosynthesis; coproporphyrinogen-III from 5-aminolevulinate: step 4/4. Functionally, catalyzes the decarboxylation of four acetate groups of uroporphyrinogen-III to yield coproporphyrinogen-III. This is Uroporphyrinogen decarboxylase from Campylobacter jejuni (strain RM1221).